We begin with the raw amino-acid sequence, 249 residues long: NADH dehydrogenase [ubiquinone] flavoprotein 2, mitochondrial (249 aa).

A mitochondrion-targeting transit peptide spans 1 to 32 (MFFSAALRARAAGLTAQWGRHVRNLHKTAMQN). An N6-acetyllysine modification is found at Lys-61. [2Fe-2S] cluster contacts are provided by Cys-135, Cys-140, Cys-176, and Cys-180. Phosphotyrosine; by SRC is present on Tyr-193. The interval 213 to 249 (IPKPGPRSGRFSCEPAGGLTSLTEPPKGPGFGVQAGL) is disordered.

It belongs to the complex I 24 kDa subunit family. Core subunit of respiratory chain NADH dehydrogenase (Complex I) which is composed of 45 different subunits. This is a component of the flavoprotein-sulfur (FP) fragment of the enzyme. It depends on [2Fe-2S] cluster as a cofactor.

Its subcellular location is the mitochondrion inner membrane. The enzyme catalyses a ubiquinone + NADH + 5 H(+)(in) = a ubiquinol + NAD(+) + 4 H(+)(out). Its function is as follows. Core subunit of the mitochondrial membrane respiratory chain NADH dehydrogenase (Complex I) which catalyzes electron transfer from NADH through the respiratory chain, using ubiquinone as an electron acceptor. Parts of the peripheral arm of the enzyme, where the electrons from NADH are accepted by flavin mononucleotide (FMN) and then passed along a chain of iron-sulfur clusters by electron tunnelling to the final acceptor ubiquinone. Contains one iron-sulfur cluster. The protein is NADH dehydrogenase [ubiquinone] flavoprotein 2, mitochondrial of Gorilla gorilla gorilla (Western lowland gorilla).